A 427-amino-acid polypeptide reads, in one-letter code: mRNA cap guanine-N(7) methyltransferase (427 aa).

A disordered region spans residues 1 to 79; that stretch reads MSLNYEQNAA…EPETEAASGA (79 aa). A phosphoserine mark is found at serine 22, serine 24, serine 29, serine 46, and serine 48. Basic and acidic residues predominate over residues 44–57; the sequence is HVSKSPREYYDEPG. In terms of domain architecture, mRNA cap 0 methyltransferase spans 103–411; the sequence is SKIFFMRNFN…LYLVCAFKKC (309 aa). 112 to 113 serves as a coordination point for mRNA; the sequence is NN. Residues lysine 116, cysteine 143, aspartate 165, aspartate 202, glutamine 225, and tyrosine 230 each coordinate S-adenosyl-L-methionine.

The protein belongs to the class I-like SAM-binding methyltransferase superfamily. mRNA cap 0 methyltransferase family.

It is found in the nucleus. The enzyme catalyses a 5'-end (5'-triphosphoguanosine)-ribonucleoside in mRNA + S-adenosyl-L-methionine = a 5'-end (N(7)-methyl 5'-triphosphoguanosine)-ribonucleoside in mRNA + S-adenosyl-L-homocysteine. Its function is as follows. mRNA-capping methyltransferase that methylates the N7 position of the added guanosine to the 5'-cap structure of mRNAs. Binds RNA containing 5'-terminal GpppC. The protein is mRNA cap guanine-N(7) methyltransferase of Drosophila melanogaster (Fruit fly).